A 147-amino-acid chain; its full sequence is Nucleoside diphosphate kinase (147 aa).

Positions 9, 57, 85, 91, 102, and 112 each coordinate ATP. Catalysis depends on His115, which acts as the Pros-phosphohistidine intermediate.

The protein belongs to the NDK family. Mg(2+) is required as a cofactor.

The protein localises to the cytoplasm. It catalyses the reaction a 2'-deoxyribonucleoside 5'-diphosphate + ATP = a 2'-deoxyribonucleoside 5'-triphosphate + ADP. The catalysed reaction is a ribonucleoside 5'-diphosphate + ATP = a ribonucleoside 5'-triphosphate + ADP. Its function is as follows. Major role in the synthesis of nucleoside triphosphates other than ATP. The ATP gamma phosphate is transferred to the NDP beta phosphate via a ping-pong mechanism, using a phosphorylated active-site intermediate. This chain is Nucleoside diphosphate kinase, found in Thermoplasma volcanium (strain ATCC 51530 / DSM 4299 / JCM 9571 / NBRC 15438 / GSS1).